The chain runs to 79 residues: uncharacterized protein (79 aa).

Residues 10–60 (EAVLTMDSKGQILLPKELRERAGLKAGDRLVAIAGCDENEEVCCLILVKAE) form the SpoVT-AbrB domain.

This is an uncharacterized protein from Archaeoglobus fulgidus (strain ATCC 49558 / DSM 4304 / JCM 9628 / NBRC 100126 / VC-16).